A 45-amino-acid chain; its full sequence is Large ribosomal subunit protein bL34 (45 aa).

The interval 1 to 45 is disordered; it reads MTKRTFGGTSRKRKRVSGFRVRMRSHTGRRVIKSRRKRGRERIAV. Over residues 10–45 the composition is skewed to basic residues; it reads SRKRKRVSGFRVRMRSHTGRRVIKSRRKRGRERIAV.

Belongs to the bacterial ribosomal protein bL34 family.

This is Large ribosomal subunit protein bL34 from Prochlorococcus marinus subsp. pastoris (strain CCMP1986 / NIES-2087 / MED4).